A 148-amino-acid polypeptide reads, in one-letter code: Deoxyuridine 5'-triphosphate nucleotidohydrolase (148 aa).

Substrate is bound by residues 67–69 (RSG), Asn80, 84–86 (LID), and Met94.

This sequence belongs to the dUTPase family. Requires Mg(2+) as cofactor.

It carries out the reaction dUTP + H2O = dUMP + diphosphate + H(+). It participates in pyrimidine metabolism; dUMP biosynthesis; dUMP from dCTP (dUTP route): step 2/2. Its function is as follows. This enzyme is involved in nucleotide metabolism: it produces dUMP, the immediate precursor of thymidine nucleotides and it decreases the intracellular concentration of dUTP so that uracil cannot be incorporated into DNA. The chain is Deoxyuridine 5'-triphosphate nucleotidohydrolase from Burkholderia thailandensis (strain ATCC 700388 / DSM 13276 / CCUG 48851 / CIP 106301 / E264).